The chain runs to 126 residues: Diadenosine hexaphosphate hydrolase (126 aa).

A Nudix hydrolase domain is found at 1–121 (MELGAGGVVF…EDLGLLEVAL (121 aa)). Substrate is bound by residues 21–23 (DRM) and 30–32 (KGH). The Nudix box signature appears at 31–52 (GHPEPGESLEEAAVREVWEETG). The Mg(2+) site is built by glutamate 46 and glutamate 50. Substrate contacts are provided by residues 66–68 (YVN), arginine 74, and glutamate 112.

It belongs to the Nudix hydrolase family. Monomer. It depends on Mg(2+) as a cofactor.

The enzyme catalyses P(1),P(6)-bis(5'-adenosyl) hexaphosphate + H2O = 2 ATP + 2 H(+). It catalyses the reaction P(1),P(5)-bis(5'-adenosyl) pentaphosphate + H2O = ADP + ATP + 2 H(+). It carries out the reaction P(1),P(4)-bis(5'-adenosyl) tetraphosphate + H2O = AMP + ATP + 2 H(+). With respect to regulation, strongly inhibited by fluoride ions. Specifically hydrolyzes (di)adenosine polyphosphates but not ATP or diadenosine triphosphate, generating ATP as the product. Diadenosine hexaphosphate (Ap6A) is the preferred substrate and hydrolysis yields 2 ATP. It is the only enzyme that symmetrically hydrolyzes Ap6A. It also hydrolyzes diadenosine pentaphosphate (Ap5A), diadenosine tetraphosphate (Ap4A) and adenosine tetraphosphate (p4A). This chain is Diadenosine hexaphosphate hydrolase, found in Thermus thermophilus.